The sequence spans 653 residues: MAPSIRKAIGAVKDQTSIGIAKVASNMAPDLEVAIVKATSHDDDPASEKYIREILNLTSLSRGYILACVTSVSRRLSKTRDWVVALKALMLVHRLLNEGDPIFQEEILYSTRRGTRMLNMSDFRDEAHSSSWDHSAFVRTYAGYLDQRLELALFERKSGVSVNSGGNSSHHSNNDDRYGRGRDDFRSPPPRSYDYENGGGGGSDFRGDNNGYGGVPKRSRSYGDMTEMGGGGGGGGRDEKKVVTPLREMTPERIFGKMGHLQRLLDRFLSLRPTGLAKNSRMILIALYPVVRESFKLYADICEVLAVLLDKFFDMEYSDCVKAFDAYASAAKQIDELIAFYNWCKETGVARSSEYPEVQRITSKLLETLEEFVRDRAKRGKSPERKEIEAPPPVVEEEEPEPDMNEIKALPPPENYTPPPPPEPEPQPEKPQFTEDLVNLREDEVTADDQGNKFALALFAGPPGNNGKWEAFSSNGVTSAWQNPAAEPGKADWELALVETTSNLEKQTAALGGGFDNLLLNGMYDQGMVRQHVSTSQLTGGSASSVALPLPGKTNNQVLALPAPDGTVEKVNQDPFAASLTIPPPSYVQMAEMEKKQYLLSQEQQLWQQYQRDGMRGQASLAKMNTGPVPAYGMPPVNGMGPPPTGYYYNNPY.

The 137-residue stretch at 23–159 (VASNMAPDLE…ELALFERKSG (137 aa)) folds into the ENTH domain. Over residues 160 to 171 (VSVNSGGNSSHH) the composition is skewed to low complexity. The interval 160 to 240 (VSVNSGGNSS…GGGGGGRDEK (81 aa)) is disordered. Over residues 172-186 (SNNDDRYGRGRDDFR) the composition is skewed to basic and acidic residues. A compositionally biased stretch (gly residues) spans 197 to 214 (NGGGGGSDFRGDNNGYGG). A Phosphoserine modification is found at S221. Residue T244 is modified to Phosphothreonine. Residues 376-389 (RAKRGKSPERKEIE) are compositionally biased toward basic and acidic residues. The disordered stretch occupies residues 376-431 (RAKRGKSPERKEIEAPPPVVEEEEPEPDMNEIKALPPPENYTPPPPPEPEPQPEKP). The span at 395–404 (VEEEEPEPDM) shows a compositional bias: acidic residues. Residues 410–425 (LPPPENYTPPPPPEPE) show a composition bias toward pro residues.

It is found in the membrane. It localises to the clathrin-coated pit. The protein resides in the golgi apparatus. The protein localises to the cytoplasmic vesicle. Its subcellular location is the clathrin-coated vesicle. This Arabidopsis thaliana (Mouse-ear cress) protein is Putative clathrin assembly protein At2g25430.